A 96-amino-acid chain; its full sequence is Aspartyl/glutamyl-tRNA(Asn/Gln) amidotransferase subunit C (96 aa).

Belongs to the GatC family. As to quaternary structure, heterotrimer of A, B and C subunits.

The enzyme catalyses L-glutamyl-tRNA(Gln) + L-glutamine + ATP + H2O = L-glutaminyl-tRNA(Gln) + L-glutamate + ADP + phosphate + H(+). It catalyses the reaction L-aspartyl-tRNA(Asn) + L-glutamine + ATP + H2O = L-asparaginyl-tRNA(Asn) + L-glutamate + ADP + phosphate + 2 H(+). Its function is as follows. Allows the formation of correctly charged Asn-tRNA(Asn) or Gln-tRNA(Gln) through the transamidation of misacylated Asp-tRNA(Asn) or Glu-tRNA(Gln) in organisms which lack either or both of asparaginyl-tRNA or glutaminyl-tRNA synthetases. The reaction takes place in the presence of glutamine and ATP through an activated phospho-Asp-tRNA(Asn) or phospho-Glu-tRNA(Gln). The polypeptide is Aspartyl/glutamyl-tRNA(Asn/Gln) amidotransferase subunit C (Sulfurimonas denitrificans (strain ATCC 33889 / DSM 1251) (Thiomicrospira denitrificans (strain ATCC 33889 / DSM 1251))).